We begin with the raw amino-acid sequence, 134 residues long: Large ribosomal subunit protein uL18 (134 aa).

This sequence belongs to the universal ribosomal protein uL18 family. Part of the 50S ribosomal subunit; part of the 5S rRNA/L5/L18/L25 subcomplex. Contacts the 5S and 23S rRNAs.

In terms of biological role, this is one of the proteins that bind and probably mediate the attachment of the 5S RNA into the large ribosomal subunit, where it forms part of the central protuberance. The protein is Large ribosomal subunit protein uL18 of Corynebacterium efficiens (strain DSM 44549 / YS-314 / AJ 12310 / JCM 11189 / NBRC 100395).